A 293-amino-acid polypeptide reads, in one-letter code: ATP synthase gamma chain (293 aa).

The protein belongs to the ATPase gamma chain family. In terms of assembly, F-type ATPases have 2 components, CF(1) - the catalytic core - and CF(0) - the membrane proton channel. CF(1) has five subunits: alpha(3), beta(3), gamma(1), delta(1), epsilon(1). CF(0) has three main subunits: a, b and c.

It is found in the cell inner membrane. Produces ATP from ADP in the presence of a proton gradient across the membrane. The gamma chain is believed to be important in regulating ATPase activity and the flow of protons through the CF(0) complex. In Allorhizobium ampelinum (strain ATCC BAA-846 / DSM 112012 / S4) (Agrobacterium vitis (strain S4)), this protein is ATP synthase gamma chain.